The sequence spans 558 residues: Probable rhamnogalacturonase B (558 aa).

An N-terminal signal peptide occupies residues 1 to 21 (MLLDKLSVLSFLGLAPIFAAA). An intrachain disulfide couples Cys42 to Cys68. Residue Asn145 is glycosylated (N-linked (GlcNAc...) asparagine). The active-site Proton donor is Asp219. Residues Cys221 and Cys238 are joined by a disulfide bond. Asn239 and Asn254 each carry an N-linked (GlcNAc...) asparagine glycan. His294 is a catalytic residue. Residue Asn321 is glycosylated (N-linked (GlcNAc...) asparagine). Cystine bridges form between Cys344-Cys350 and Cys372-Cys381. Residues 503–526 (VGAQEGSTTSAPSFAAPSGAGNSP) are compositionally biased toward low complexity. The interval 503-558 (VGAQEGSTTSAPSFAAPSGAGNSPQGPTGASGFGEKGQQGEQGEQGEQGEQGVCYV) is disordered.

This sequence belongs to the glycosyl hydrolase 28 family.

Its subcellular location is the secreted. The enzyme catalyses Endohydrolysis of alpha-D-GalA-(1-&gt;2)-alpha-L-Rha glycosidic bond in the rhamnogalacturonan I backbone with initial inversion of anomeric configuration releasing oligosaccharides with beta-D-GalA at the reducing end.. Pectinolytic enzymes consist of four classes of enzymes: pectine lyase, polygalacturonase, pectin methylesterase and rhamnogalacturonase. Hydrolyzes alpha-D-galacturonopyranosyl-(1,2)-alpha-L-rhamnopyranosyl linkages in the backbone of the hairy regions of pectins. The chain is Probable rhamnogalacturonase B (rhgB) from Aspergillus niger (strain ATCC MYA-4892 / CBS 513.88 / FGSC A1513).